The chain runs to 329 residues: DNA-directed RNA polymerase subunit alpha (329 aa).

The interval 1–235 is alpha N-terminal domain (alpha-NTD); that stretch reads MQGSVTEFLK…EQLEAFVDLR (235 aa). Positions 249–329 are alpha C-terminal domain (alpha-CTD); the sequence is FDPILLRPVD…NWPPASIADE (81 aa).

This sequence belongs to the RNA polymerase alpha chain family. As to quaternary structure, homodimer. The RNAP catalytic core consists of 2 alpha, 1 beta, 1 beta' and 1 omega subunit. When a sigma factor is associated with the core the holoenzyme is formed, which can initiate transcription.

It catalyses the reaction RNA(n) + a ribonucleoside 5'-triphosphate = RNA(n+1) + diphosphate. Its function is as follows. DNA-dependent RNA polymerase catalyzes the transcription of DNA into RNA using the four ribonucleoside triphosphates as substrates. The polypeptide is DNA-directed RNA polymerase subunit alpha (Enterobacter sp. (strain 638)).